Here is a 112-residue protein sequence, read N- to C-terminus: Putative UPF0320 protein YEL074W (112 aa).

Residues 93–112 are disordered; it reads EKSPSKSPKHKNILPFNFTK.

This sequence belongs to the UPF0320 family.

This chain is Putative UPF0320 protein YEL074W, found in Saccharomyces cerevisiae (strain ATCC 204508 / S288c) (Baker's yeast).